Reading from the N-terminus, the 294-residue chain is Transcription termination/antitermination protein NusG (294 aa).

The segment at 1–91 is disordered; sequence MSDPNLNDAV…EEAEPAAPVD (91 aa). The segment covering 25 to 39 has biased composition (acidic residues); it reads DIVEAADSVDPDQAE. The span at 40–53 shows a compositional bias: low complexity; it reads AADLAAGEPAERAA. The segment covering 59–85 has biased composition (acidic residues); sequence DDSDEDDAAAEEAVEADDESADEEEAE.

Belongs to the NusG family.

In terms of biological role, participates in transcription elongation, termination and antitermination. The polypeptide is Transcription termination/antitermination protein NusG (Streptomyces griseus).